A 142-amino-acid polypeptide reads, in one-letter code: ATP synthase epsilon chain (142 aa).

This sequence belongs to the ATPase epsilon chain family. As to quaternary structure, F-type ATPases have 2 components, CF(1) - the catalytic core - and CF(0) - the membrane proton channel. CF(1) has five subunits: alpha(3), beta(3), gamma(1), delta(1), epsilon(1). CF(0) has three main subunits: a, b and c.

The protein localises to the cell inner membrane. In terms of biological role, produces ATP from ADP in the presence of a proton gradient across the membrane. This is ATP synthase epsilon chain from Histophilus somni (strain 129Pt) (Haemophilus somnus).